Reading from the N-terminus, the 164-residue chain is MRVLGIDPGSRITGYGIIEKIGNRLVHVDNGAIHTDSHREFALRLHKIYEGLSRVIEEYRPDAMAVEQVFLAHNAQSALKLGQARGAAIVAGVSAGLPVSEYTAMQVKQAVVGYGHARKEQVQQMVKSLLNLPEIAQADASDALAVAVCHANSAVMKSVLRSIR.

Active-site residues include D7, E67, and D139. 3 residues coordinate Mg(2+): D7, E67, and D139.

It belongs to the RuvC family. In terms of assembly, homodimer which binds Holliday junction (HJ) DNA. The HJ becomes 2-fold symmetrical on binding to RuvC with unstacked arms; it has a different conformation from HJ DNA in complex with RuvA. In the full resolvosome a probable DNA-RuvA(4)-RuvB(12)-RuvC(2) complex forms which resolves the HJ. The cofactor is Mg(2+).

The protein localises to the cytoplasm. It carries out the reaction Endonucleolytic cleavage at a junction such as a reciprocal single-stranded crossover between two homologous DNA duplexes (Holliday junction).. Functionally, the RuvA-RuvB-RuvC complex processes Holliday junction (HJ) DNA during genetic recombination and DNA repair. Endonuclease that resolves HJ intermediates. Cleaves cruciform DNA by making single-stranded nicks across the HJ at symmetrical positions within the homologous arms, yielding a 5'-phosphate and a 3'-hydroxyl group; requires a central core of homology in the junction. The consensus cleavage sequence is 5'-(A/T)TT(C/G)-3'. Cleavage occurs on the 3'-side of the TT dinucleotide at the point of strand exchange. HJ branch migration catalyzed by RuvA-RuvB allows RuvC to scan DNA until it finds its consensus sequence, where it cleaves and resolves the cruciform DNA. The protein is Crossover junction endodeoxyribonuclease RuvC of Geobacter sulfurreducens (strain ATCC 51573 / DSM 12127 / PCA).